The primary structure comprises 299 residues: Nicotinate-nucleotide pyrophosphorylase [carboxylating] (299 aa).

Positions 8-12 (FLLPP) are important for hexamer formation. Residues arginine 102, 138–139 (RK), 160–161 (HR), lysine 171, glutamate 201, aspartate 222, 248–250 (SGG), and glycine 270 contribute to the quinolinate site.

This sequence belongs to the NadC/ModD family. In terms of assembly, hexamer formed by 3 homodimers.

The catalysed reaction is nicotinate beta-D-ribonucleotide + CO2 + diphosphate = quinolinate + 5-phospho-alpha-D-ribose 1-diphosphate + 2 H(+). Its pathway is cofactor biosynthesis; NAD(+) biosynthesis; nicotinate D-ribonucleotide from quinolinate: step 1/1. In terms of biological role, involved in the catabolism of quinolinic acid (QA). The polypeptide is Nicotinate-nucleotide pyrophosphorylase [carboxylating] (Qprt) (Rattus norvegicus (Rat)).